A 95-amino-acid chain; its full sequence is Ragulator complex protein LAMTOR4 homolog (95 aa).

This sequence belongs to the LAMTOR4 family. As to quaternary structure, part of the Ragulator complex.

Its subcellular location is the lysosome. Regulator of the TOR pathway, a signaling cascade that promotes cell growth in response to growth factors, energy levels, and amino acids. As part of the Ragulator complex, may activate the TOR signaling cascade in response to amino acids. The polypeptide is Ragulator complex protein LAMTOR4 homolog (Nematostella vectensis (Starlet sea anemone)).